Consider the following 306-residue polypeptide: Oligopeptide transport system permease protein OppB (306 aa).

Residues 1-12 (MLKFILRRCLEA) are Cytoplasmic-facing. A helical membrane pass occupies residues 13 to 30 (IPTLFILITISFFMMRLA). Residues 31–101 (PGSPFTGERA…ASFPVSAKLG (71 aa)) are Periplasmic-facing. One can recognise an ABC transmembrane type-1 domain in the interval 94 to 293 (FPVSAKLGAA…ALTILFNAIV (200 aa)). A helical membrane pass occupies residues 102–121 (AAAFLLAVIIGVSAGVIAAL). At 122–133 (KQNTRWDYTVMG) the chain is on the cytoplasmic side. Residues 134–156 (FAMTGVVIPSFVVAPLLVMVFAI) form a helical membrane-spanning segment. At 157 to 165 (TLQWLPGGG) the chain is on the periplasmic side. Residues 166-188 (WNGGALKFMILPMVALSLAYIAS) traverse the membrane as a helical segment. Topologically, residues 189–227 (IARITRGSMIEVLHSNFIRTARAKGLPMRRIIFRHALKP) are cytoplasmic. A helical transmembrane segment spans residues 228–250 (ALLPVLSYMGPAFVGIITGSMVI). Residues 251–277 (ETIYGLPGIGQLFVNGALNRDYSLVLS) are Periplasmic-facing. Residues 278–300 (LTILVGALTILFNAIVDVLYAVI) traverse the membrane as a helical segment. The Cytoplasmic portion of the chain corresponds to 301-306 (DPKIRY).

The protein belongs to the binding-protein-dependent transport system permease family. OppBC subfamily. The complex is composed of two ATP-binding proteins (OppD and OppF), two transmembrane proteins (OppB and OppC) and a solute-binding protein (OppA).

The protein localises to the cell inner membrane. Part of the ABC transporter complex OppABCDF involved in the uptake of oligopeptides, including the cell wall murein tripeptide L-alanyl-gamma-D-glutamyl-meso-diaminopimelate. Responsible for the translocation of the substrate across the membrane. Plays an important nutritional role and is involved in the recycling of cell wall peptides. This Salmonella typhimurium (strain LT2 / SGSC1412 / ATCC 700720) protein is Oligopeptide transport system permease protein OppB.